The sequence spans 65 residues: Large ribosomal subunit protein bL35 (65 aa).

Residues 1 to 26 form a disordered region; it reads MPKIKTLRGAAKRFKKTASGGFKRKQ. Residues 10-26 show a composition bias toward basic residues; that stretch reads AAKRFKKTASGGFKRKQ.

This sequence belongs to the bacterial ribosomal protein bL35 family.

This chain is Large ribosomal subunit protein bL35, found in Histophilus somni (strain 2336) (Haemophilus somnus).